The primary structure comprises 1035 residues: Cell-division control histidine kinase PdhS (1035 aa).

The important for polar localization stretch occupies residues 1 to 613 (MSGSYPFIDI…HADGSEEPVD (613 aa)). Positions 500 to 533 (QGLANTRAESETPVSETSSIEPVEPTPPVKTRSE) are disordered. Positions 614–1035 (THLNAIAWRG…VFPPTRVLAD (422 aa)) are interaction with DivK. Residues 659-730 (HVEELKTILD…YLHGLSGNGV (72 aa)) enclose the PAS domain. Residues 802–1031 (RISHEIRTPL…VVEIVFPPTR (230 aa)) form the Histidine kinase domain. Phosphohistidine; by autocatalysis is present on H805.

Interacts with DivK.

It localises to the cytoplasm. The catalysed reaction is ATP + protein L-histidine = ADP + protein N-phospho-L-histidine.. In terms of biological role, functions as a polar differentiation marker. Essential protein that, by localizing in the old pole of dividing cells, controls cell division and maturation, probably through control of DivK phosphorylation status and cellular distribution, which in turn regulates CtrA, a transcriptional regulator of the minB operon. The asymmetrical localization of this protein is probably required for cells to enter a new division cycle. The protein is Cell-division control histidine kinase PdhS (pdhS) of Brucella suis (strain ATCC 23445 / NCTC 10510).